The chain runs to 228 residues: Interleukin-27 subunit beta (228 aa).

The N-terminal stretch at 1–18 is a signal peptide; that stretch reads MSKLLFLSLALWASRSPG. 2 Fibronectin type-III domains span residues 26-124 and 127-224; these read ALSQ…VAER and KPDP…VESA. Asparagine 54 and asparagine 104 each carry an N-linked (GlcNAc...) asparagine glycan.

The protein belongs to the type I cytokine receptor family. Type 3 subfamily. As to quaternary structure, heterodimer with IL27/IL27A; not disulfide-linked. This heterodimer is known as interleukin IL-27. Heterodimer with IL12A; not disulfide-linked. This heterodimer is known as interleukin IL-35. Interacts with SQSTM1.

The protein localises to the secreted. In terms of biological role, associates with IL27 to form the IL-27 interleukin, a heterodimeric cytokine which functions in innate immunity. IL-27 has pro- and anti-inflammatory properties, that can regulate T-helper cell development, suppress T-cell proliferation, stimulate cytotoxic T-cell activity, induce isotype switching in B-cells, and that has diverse effects on innate immune cells. Among its target cells are CD4 T-helper cells which can differentiate in type 1 effector cells (TH1), type 2 effector cells (TH2) and IL17 producing helper T-cells (TH17). It drives rapid clonal expansion of naive but not memory CD4 T-cells. It also strongly synergizes with IL-12 to trigger interferon-gamma/IFN-gamma production of naive CD4 T-cells, binds to the cytokine receptor WSX-1/TCCR. Another important role of IL-27 is its antitumor activity as well as its antiangiogenic activity with activation of production of antiangiogenic chemokines. This chain is Interleukin-27 subunit beta (Ebi3), found in Mus musculus (Mouse).